Reading from the N-terminus, the 341-residue chain is tRNA N6-adenosine threonylcarbamoyltransferase (341 aa).

Histidine 111 and histidine 115 together coordinate Fe cation. Residues 134–138 (LVSGG), aspartate 167, glycine 180, and asparagine 276 contribute to the substrate site. Aspartate 304 is a binding site for Fe cation.

This sequence belongs to the KAE1 / TsaD family. It depends on Fe(2+) as a cofactor.

The protein localises to the cytoplasm. The catalysed reaction is L-threonylcarbamoyladenylate + adenosine(37) in tRNA = N(6)-L-threonylcarbamoyladenosine(37) in tRNA + AMP + H(+). In terms of biological role, required for the formation of a threonylcarbamoyl group on adenosine at position 37 (t(6)A37) in tRNAs that read codons beginning with adenine. Is involved in the transfer of the threonylcarbamoyl moiety of threonylcarbamoyl-AMP (TC-AMP) to the N6 group of A37, together with TsaE and TsaB. TsaD likely plays a direct catalytic role in this reaction. This Pseudomonas aeruginosa (strain LESB58) protein is tRNA N6-adenosine threonylcarbamoyltransferase.